Consider the following 161-residue polypeptide: Transcription initiation factor TFIID subunit 12 (161 aa).

Residues 15-55 (FSSIKPEPASTPPQGSMANSTAVVKIPGTPGAGGRLSPENN) are disordered. Residue lysine 19 forms a Glycyl lysine isopeptide (Lys-Gly) (interchain with G-Cter in SUMO2) linkage. The span at 26–36 (PPQGSMANSTA) shows a compositional bias: polar residues. Residue threonine 43 is modified to Phosphothreonine. A Phosphoserine modification is found at serine 51. The residue at position 59 (threonine 59) is a Phosphothreonine. The Histone-fold domain maps to 59–126 (TKKKLQDLVR…QLHLERQWNM (68 aa)).

Belongs to the TAF12 family. Component of the TFIID basal transcription factor complex, composed of TATA-box-binding protein TBP, and a number of TBP-associated factors (TAFs), including TAF1, TAF2, TAF3, TAF4, TAF5, TAF6, TAF7, TAF8, TAF9, TAF10, TAF11, TAF12 and TAF13. Component of the TATA-binding protein-free TAF complex (TFTC), the PCAF histone acetylase complex and the STAGA transcription coactivator-HAT complex. Component of the PCAF complex, at least composed of TADA2L/ADA2, TADA3L/ADA3, TAF5L/PAF65-beta, SUPT3H, TAF6L, TAF9, TAF10, TAF12 and TRRAP. Component of the STAGA transcription coactivator-HAT complex, at least composed of SUPT3H, GCN5L2, TAF5L, TAF6L, STAF65-gamma/SUPT7L, TADA3L, TAD1L, TAF10, TAF12, TRRAP and TAF9. Interacts with ATF7 (via the transactivation domain); the interaction is prevented by sumoylation of ATF7. In terms of assembly, interacts with TBP; the interaction is direct. Interacts with TAF10; the interaction is direct. Interacts with ATF7, promoting transactivation by ATF7. As to quaternary structure, does not promote the transactivation of ATF7. As to expression, ubiquitous.

Its subcellular location is the nucleus. The TFIID basal transcription factor complex plays a major role in the initiation of RNA polymerase II (Pol II)-dependent transcription. TFIID recognizes and binds promoters with or without a TATA box via its subunit TBP, a TATA-box-binding protein, and promotes assembly of the pre-initiation complex (PIC). The TFIID complex consists of TBP and TBP-associated factors (TAFs), including TAF1, TAF2, TAF3, TAF4, TAF5, TAF6, TAF7, TAF8, TAF9, TAF10, TAF11, TAF12 and TAF13. Component of the TATA-binding protein-free TAF complex (TFTC), the PCAF histone acetylase complex and the STAGA transcription coactivator-HAT complex. The sequence is that of Transcription initiation factor TFIID subunit 12 from Homo sapiens (Human).